A 249-amino-acid chain; its full sequence is Tetraspanin-7 (249 aa).

Over 1 to 16 (MASRRMETKPVITCLK) the chain is Cytoplasmic. The helical transmembrane segment at 17-40 (TLLIIYSFVFWITGVILLAVGVWG) threads the bilayer. The Extracellular segment spans residues 41 to 56 (KLTLGTYISLIAENST). The N-linked (GlcNAc...) asparagine glycan is linked to asparagine 54. The chain crosses the membrane as a helical span at residues 57–75 (NAPYVLIGTGTTIVVFGLF). Residues 76-86 (GCFATCRGSPW) are Cytoplasmic-facing. A helical membrane pass occupies residues 87 to 112 (MLKLYAMFLSLVFLAELVAGISGFVF). The Extracellular segment spans residues 113-213 (RHEIKDTFLR…LVTSFMETNM (101 aa)). N-linked (GlcNAc...) asparagine glycans are attached at residues asparagine 155, asparagine 158, asparagine 177, and asparagine 188. The chain crosses the membrane as a helical span at residues 214-234 (GIIAGVAFGIAFSQLIGMLLA). Topologically, residues 235 to 249 (CCLSRFITANQYEMV) are cytoplasmic.

The protein belongs to the tetraspanin (TM4SF) family. As to quaternary structure, (Microbial infection) Interacts with herpes simplex virus 1 (HHV-1) UL35. In terms of tissue distribution, not solely expressed in T-cells. Expressed in acute myelocytic leukemia cells of some patients.

The protein resides in the membrane. In terms of biological role, may be involved in cell proliferation and cell motility. The protein is Tetraspanin-7 (TSPAN7) of Homo sapiens (Human).